Reading from the N-terminus, the 334-residue chain is Glycerol-3-phosphate dehydrogenase [NAD(P)+] (334 aa).

NADPH contacts are provided by Trp-13, Arg-33, and Lys-106. Positions 106, 137, and 139 each coordinate sn-glycerol 3-phosphate. Ala-141 is a binding site for NADPH. 5 residues coordinate sn-glycerol 3-phosphate: Lys-192, Asp-245, Ser-255, Arg-256, and Asn-257. Lys-192 acts as the Proton acceptor in catalysis. NADPH is bound at residue Arg-256. 2 residues coordinate NADPH: Val-280 and Glu-282.

This sequence belongs to the NAD-dependent glycerol-3-phosphate dehydrogenase family.

The protein resides in the cytoplasm. The enzyme catalyses sn-glycerol 3-phosphate + NAD(+) = dihydroxyacetone phosphate + NADH + H(+). It catalyses the reaction sn-glycerol 3-phosphate + NADP(+) = dihydroxyacetone phosphate + NADPH + H(+). The protein operates within membrane lipid metabolism; glycerophospholipid metabolism. Functionally, catalyzes the reduction of the glycolytic intermediate dihydroxyacetone phosphate (DHAP) to sn-glycerol 3-phosphate (G3P), the key precursor for phospholipid synthesis. This Chlamydia caviae (strain ATCC VR-813 / DSM 19441 / 03DC25 / GPIC) (Chlamydophila caviae) protein is Glycerol-3-phosphate dehydrogenase [NAD(P)+].